Consider the following 185-residue polypeptide: Ribosome-recycling factor (185 aa).

The protein belongs to the RRF family.

Its subcellular location is the cytoplasm. Functionally, responsible for the release of ribosomes from messenger RNA at the termination of protein biosynthesis. May increase the efficiency of translation by recycling ribosomes from one round of translation to another. The protein is Ribosome-recycling factor of Roseiflexus sp. (strain RS-1).